We begin with the raw amino-acid sequence, 548 residues long: Fumarate hydratase class I, aerobic (548 aa).

[4Fe-4S] cluster-binding residues include C105, C224, and C318.

Belongs to the class-I fumarase family. In terms of assembly, homodimer. [4Fe-4S] cluster serves as cofactor.

The catalysed reaction is (S)-malate = fumarate + H2O. It catalyses the reaction oxaloacetate = enol-oxaloacetate. It participates in carbohydrate metabolism; tricarboxylic acid cycle; (S)-malate from fumarate: step 1/1. In terms of biological role, catalyzes the reversible hydration of fumarate to (S)-malate. Functions as an aerobic enzyme in the direction of malate formation as part of the citric acid cycle. Accounts for about 80% of the fumarase activity when the bacteria grow aerobically. To a lesser extent, also displays D-tartrate dehydratase activity in vitro, but is not able to convert (R)-malate, L-tartrate or meso-tartrate. Can also catalyze the isomerization of enol- to keto-oxaloacetate. The sequence is that of Fumarate hydratase class I, aerobic from Escherichia coli O6:H1 (strain CFT073 / ATCC 700928 / UPEC).